A 91-amino-acid chain; its full sequence is Small ribosomal subunit protein bS20 (91 aa).

Residues 1–21 (MPLHKSAEKRLRQSARRNERN) are compositionally biased toward basic and acidic residues. 2 disordered regions span residues 1–25 (MPLHKSAEKRLRQSARRNERNRARK) and 70–91 (PNKASRKKSQLSRMLNNYMKAE). A compositionally biased stretch (basic residues) spans 70–79 (PNKASRKKSQ).

It belongs to the bacterial ribosomal protein bS20 family.

Its function is as follows. Binds directly to 16S ribosomal RNA. The protein is Small ribosomal subunit protein bS20 of Chlorobium phaeobacteroides (strain BS1).